The chain runs to 326 residues: Zinc finger CCCH domain-containing protein 15 (326 aa).

A compositionally biased stretch (gly residues) spans 1–14; sequence MADGGGGGEAGSGG. The tract at residues 1-142 is disordered; the sequence is MADGGGGGEA…SSSGSGSGEV (142 aa). Residues 24–33 are compositionally biased toward basic residues; that stretch reads KPPKNIRKRP. The span at 47–64 shows a compositional bias: low complexity; the sequence is SGAIAAARAKKAPSSTSK. The segment covering 81–100 has biased composition (polar residues); sequence YESSRTIQASTDSRATATLE. Positions 104–125 are enriched in basic and acidic residues; sequence EFDRDARAIRERQLKQAEESLK. Residues 187–215 form a C3H1-type zinc finger; it reads DYQPDICKDYKETGYCGYGDSCKFMHDRG. Residues 265–303 form an RING-type zinc finger; the sequence is CYICREPFVDPVVTKCKHYFCEHCALKHHSKNKKCFVCN.

The chain is Zinc finger CCCH domain-containing protein 15 from Oryza sativa subsp. japonica (Rice).